Here is a 105-residue protein sequence, read N- to C-terminus: Small ribosomal subunit protein uS10 (105 aa).

This sequence belongs to the universal ribosomal protein uS10 family. As to quaternary structure, part of the 30S ribosomal subunit.

In terms of biological role, involved in the binding of tRNA to the ribosomes. The protein is Small ribosomal subunit protein uS10 of Phytoplasma australiense.